Here is a 604-residue protein sequence, read N- to C-terminus: Elongation factor 4 (604 aa).

The tr-type G domain occupies 9–191 (DAIRNFCIIA…AVISRVPAPA (183 aa)). Residues 21–26 (DHGKST) and 138–141 (NKID) each bind GTP.

Belongs to the TRAFAC class translation factor GTPase superfamily. Classic translation factor GTPase family. LepA subfamily.

It is found in the cell inner membrane. The enzyme catalyses GTP + H2O = GDP + phosphate + H(+). Required for accurate and efficient protein synthesis under certain stress conditions. May act as a fidelity factor of the translation reaction, by catalyzing a one-codon backward translocation of tRNAs on improperly translocated ribosomes. Back-translocation proceeds from a post-translocation (POST) complex to a pre-translocation (PRE) complex, thus giving elongation factor G a second chance to translocate the tRNAs correctly. Binds to ribosomes in a GTP-dependent manner. In Prosthecochloris aestuarii (strain DSM 271 / SK 413), this protein is Elongation factor 4.